Reading from the N-terminus, the 208-residue chain is Urease accessory protein UreG 1 (208 aa).

G14–T21 contacts GTP.

This sequence belongs to the SIMIBI class G3E GTPase family. UreG subfamily. In terms of assembly, homodimer. UreD, UreF and UreG form a complex that acts as a GTP-hydrolysis-dependent molecular chaperone, activating the urease apoprotein by helping to assemble the nickel containing metallocenter of UreC. The UreE protein probably delivers the nickel.

It localises to the cytoplasm. Its function is as follows. Facilitates the functional incorporation of the urease nickel metallocenter. This process requires GTP hydrolysis, probably effectuated by UreG. In terms of biological role, disruption of the ure1 gene cluster suggests that it protects brucellae during their passage through the stomach. The major route of infection in human brucellosis is oral. In Brucella abortus (strain 2308), this protein is Urease accessory protein UreG 1.